A 177-amino-acid chain; its full sequence is MESATTDIRDSIGSIPDYPKPGIIFRDITPLLQNPDAFRLTINTLKQRYAGQGITQIAAVEARGFIFGSALAYAMGCGVTLLRKPGKLPGKVTRQNYELEYGSDELQMHENALTENDRVLIVDDLLATGGTVVAASQLIKSSGADVVEAAFVVSLPELGGEDKLQQAGVACYTLCQF.

It belongs to the purine/pyrimidine phosphoribosyltransferase family. In terms of assembly, homodimer.

The protein localises to the cytoplasm. It carries out the reaction AMP + diphosphate = 5-phospho-alpha-D-ribose 1-diphosphate + adenine. It participates in purine metabolism; AMP biosynthesis via salvage pathway; AMP from adenine: step 1/1. Its function is as follows. Catalyzes a salvage reaction resulting in the formation of AMP, that is energically less costly than de novo synthesis. In Idiomarina loihiensis (strain ATCC BAA-735 / DSM 15497 / L2-TR), this protein is Adenine phosphoribosyltransferase.